The primary structure comprises 278 residues: Undecaprenyl-diphosphatase (278 aa).

Transmembrane regions (helical) follow at residues 3–23 (YILI…IPIS), 42–62 (VAYS…IIYF), 88–108 (FLVI…LFVI), 112–132 (ILGL…IIIY), 152–172 (IIIV…RSGI), 190–210 (LSFI…VLFS), 225–245 (GLLI…NALL), and 253–273 (VVVL…LSGI).

The protein belongs to the UppP family.

It is found in the cell membrane. It carries out the reaction di-trans,octa-cis-undecaprenyl diphosphate + H2O = di-trans,octa-cis-undecaprenyl phosphate + phosphate + H(+). Functionally, catalyzes the dephosphorylation of undecaprenyl diphosphate (UPP). The polypeptide is Undecaprenyl-diphosphatase (Saccharolobus islandicus (strain M.14.25 / Kamchatka #1) (Sulfolobus islandicus)).